Consider the following 141-residue polypeptide: Nucleoside diphosphate kinase (141 aa).

ATP is bound by residues lysine 11, phenylalanine 59, arginine 87, threonine 93, arginine 104, and asparagine 114. Catalysis depends on histidine 117, which acts as the Pros-phosphohistidine intermediate.

It belongs to the NDK family. As to quaternary structure, homotetramer. Mg(2+) serves as cofactor.

It is found in the cytoplasm. It carries out the reaction a 2'-deoxyribonucleoside 5'-diphosphate + ATP = a 2'-deoxyribonucleoside 5'-triphosphate + ADP. It catalyses the reaction a ribonucleoside 5'-diphosphate + ATP = a ribonucleoside 5'-triphosphate + ADP. Its function is as follows. Major role in the synthesis of nucleoside triphosphates other than ATP. The ATP gamma phosphate is transferred to the NDP beta phosphate via a ping-pong mechanism, using a phosphorylated active-site intermediate. In Chromobacterium violaceum (strain ATCC 12472 / DSM 30191 / JCM 1249 / CCUG 213 / NBRC 12614 / NCIMB 9131 / NCTC 9757 / MK), this protein is Nucleoside diphosphate kinase.